The primary structure comprises 425 residues: Serine--tRNA ligase (425 aa).

230–232 (TAE) provides a ligand contact to L-serine. 261 to 263 (RSE) is a binding site for ATP. E284 provides a ligand contact to L-serine. An ATP-binding site is contributed by 348-351 (EISS). S384 lines the L-serine pocket.

The protein belongs to the class-II aminoacyl-tRNA synthetase family. Type-1 seryl-tRNA synthetase subfamily. In terms of assembly, homodimer. The tRNA molecule binds across the dimer.

It localises to the cytoplasm. The catalysed reaction is tRNA(Ser) + L-serine + ATP = L-seryl-tRNA(Ser) + AMP + diphosphate + H(+). It catalyses the reaction tRNA(Sec) + L-serine + ATP = L-seryl-tRNA(Sec) + AMP + diphosphate + H(+). The protein operates within aminoacyl-tRNA biosynthesis; selenocysteinyl-tRNA(Sec) biosynthesis; L-seryl-tRNA(Sec) from L-serine and tRNA(Sec): step 1/1. Functionally, catalyzes the attachment of serine to tRNA(Ser). Is also able to aminoacylate tRNA(Sec) with serine, to form the misacylated tRNA L-seryl-tRNA(Sec), which will be further converted into selenocysteinyl-tRNA(Sec). The chain is Serine--tRNA ligase from Streptococcus pyogenes serotype M3 (strain SSI-1).